The chain runs to 417 residues: MFSRDVRLETYDPELAKAIAAEAGRQEDHVELIASENYCSPLVMEAQGSQLTNKYAEGYPGKRYYGGCEFVDIAEQLAIDRIKQVFGADYANVQPHSGSQANQAVYLALLQPGDTILGMSLAHGGHLTHGAKVNVSGKLFYAVQYGVNEQGLIDYDEVQRLATEHKPKMVVAGFSAYSQKIDWARFRAIADSVGAYLFVDMAHIAGLVAAGVYPSPMEHAHVVTSTTHKTLRGPRGGIIVAKGASEELQKKLQSIVFPGIQGGPLMHVIAAKAVAFKEALEPAFKTYQQQVVKNAQAMANTLIARGYKIVSGGTENHLMLVDMIGRDVSGKDAEAALGKAHITVNKNSVPNDPRSPFVTSGLRLGTPAITTRGYQEQDSIDLANWIADVLDAPTDEAVLAKVRDAVTAQCKRYPVYG.

(6S)-5,6,7,8-tetrahydrofolate-binding positions include L121 and 125-127 (GHL). K229 carries the post-translational modification N6-(pyridoxal phosphate)lysine. Residue 355-357 (SPF) coordinates (6S)-5,6,7,8-tetrahydrofolate.

Belongs to the SHMT family. As to quaternary structure, homodimer. It depends on pyridoxal 5'-phosphate as a cofactor.

The protein localises to the cytoplasm. The catalysed reaction is (6R)-5,10-methylene-5,6,7,8-tetrahydrofolate + glycine + H2O = (6S)-5,6,7,8-tetrahydrofolate + L-serine. It functions in the pathway one-carbon metabolism; tetrahydrofolate interconversion. Its pathway is amino-acid biosynthesis; glycine biosynthesis; glycine from L-serine: step 1/1. In terms of biological role, catalyzes the reversible interconversion of serine and glycine with tetrahydrofolate (THF) serving as the one-carbon carrier. This reaction serves as the major source of one-carbon groups required for the biosynthesis of purines, thymidylate, methionine, and other important biomolecules. Also exhibits THF-independent aldolase activity toward beta-hydroxyamino acids, producing glycine and aldehydes, via a retro-aldol mechanism. This Xanthomonas euvesicatoria pv. vesicatoria (strain 85-10) (Xanthomonas campestris pv. vesicatoria) protein is Serine hydroxymethyltransferase.